We begin with the raw amino-acid sequence, 206 residues long: Eukaryotic translation initiation factor isoform 4E-2 (206 aa).

C103 and C142 are disulfide-bonded.

The protein belongs to the eukaryotic initiation factor 4E family. In terms of assembly, EIF4F is a multi-subunit complex, the composition of which varies with external and internal environmental conditions. It is composed of at least EIF4A, EIF4E and EIF4G. EIF4E is also known to interact with other partners. In higher plants two isoforms of EIF4F have been identified, named isoform EIF4F and isoform EIF(iso)4F. Isoform EIF4F has subunits p220 and p26, whereas isoform EIF(iso)4F has subunits p82 and p28. In terms of processing, according to the redox status, the Cys-103-Cys-142 disulfide bridge may have a role in regulating protein function by affecting its ability to bind capped mRNA.

Recognizes and binds the 7-methylguanosine-containing mRNA cap during an early step in the initiation of protein synthesis and facilitates ribosome binding by inducing the unwinding of the mRNAs secondary structures. This is Eukaryotic translation initiation factor isoform 4E-2 from Oryza sativa subsp. japonica (Rice).